Consider the following 445-residue polypeptide: Tubulin beta chain (445 aa).

The MREI motif motif lies at 1–4 (MREI). The GTP site is built by Gln-11, Glu-69, Ser-138, Gly-142, Thr-143, Gly-144, Asn-204, and Asn-226. Residue Glu-69 coordinates Mg(2+). A disordered region spans residues 421-445 (EYQQYQDATAEEEGEGEEEGDEEVA). Residues 429–445 (TAEEEGEGEEEGDEEVA) show a composition bias toward acidic residues. Glu-438 is modified (5-glutamyl polyglutamate).

The protein belongs to the tubulin family. In terms of assembly, dimer of alpha and beta chains. A typical microtubule is a hollow water-filled tube with an outer diameter of 25 nm and an inner diameter of 15 nM. Alpha-beta heterodimers associate head-to-tail to form protofilaments running lengthwise along the microtubule wall with the beta-tubulin subunit facing the microtubule plus end conferring a structural polarity. Microtubules usually have 13 protofilaments but different protofilament numbers can be found in some organisms and specialized cells. Mg(2+) is required as a cofactor. In terms of processing, some glutamate residues at the C-terminus are polyglycylated, resulting in polyglycine chains on the gamma-carboxyl group. Glycylation is mainly limited to tubulin incorporated into axonemes (cilia and flagella) whereas glutamylation is prevalent in neuronal cells, centrioles, axonemes, and the mitotic spindle. Both modifications can coexist on the same protein on adjacent residues, and lowering polyglycylation levels increases polyglutamylation, and reciprocally. The precise function of polyglycylation is still unclear. Post-translationally, some glutamate residues at the C-terminus are polyglutamylated, resulting in polyglutamate chains on the gamma-carboxyl group. Polyglutamylation plays a key role in microtubule severing by spastin (SPAST). SPAST preferentially recognizes and acts on microtubules decorated with short polyglutamate tails: severing activity by SPAST increases as the number of glutamates per tubulin rises from one to eight, but decreases beyond this glutamylation threshold. Brain.

Its subcellular location is the cytoplasm. The protein localises to the cytoskeleton. In terms of biological role, tubulin is the major constituent of microtubules, a cylinder consisting of laterally associated linear protofilaments composed of alpha- and beta-tubulin heterodimers. Microtubules grow by the addition of GTP-tubulin dimers to the microtubule end, where a stabilizing cap forms. Below the cap, tubulin dimers are in GDP-bound state, owing to GTPase activity of alpha-tubulin. The polypeptide is Tubulin beta chain (Pseudopleuronectes americanus (Winter flounder)).